Here is a 446-residue protein sequence, read N- to C-terminus: Xylose isomerase 2 (446 aa).

Catalysis depends on residues H109 and D112. The Mg(2+) site is built by E240, E276, H279, D304, D315, D317, and D347.

This sequence belongs to the xylose isomerase family. As to quaternary structure, homotetramer. Mg(2+) serves as cofactor.

It is found in the cytoplasm. It catalyses the reaction alpha-D-xylose = alpha-D-xylulofuranose. This is Xylose isomerase 2 from Xanthomonas campestris pv. campestris (strain 8004).